Reading from the N-terminus, the 96-residue chain is Large ribosomal subunit protein uL23 (96 aa).

This sequence belongs to the universal ribosomal protein uL23 family. Part of the 50S ribosomal subunit. Contacts protein L29, and trigger factor when it is bound to the ribosome.

One of the early assembly proteins it binds 23S rRNA. One of the proteins that surrounds the polypeptide exit tunnel on the outside of the ribosome. Forms the main docking site for trigger factor binding to the ribosome. The sequence is that of Large ribosomal subunit protein uL23 from Oleidesulfovibrio alaskensis (strain ATCC BAA-1058 / DSM 17464 / G20) (Desulfovibrio alaskensis).